The sequence spans 72 residues: Alpha-elapitoxin-Dpp2c (72 aa).

5 cysteine pairs are disulfide-bonded: C3/C21, C14/C42, C27/C31, C46/C57, and C58/C63.

Belongs to the three-finger toxin family. Long-chain subfamily. Type II alpha-neurotoxin sub-subfamily. As to expression, expressed by the venom gland.

It is found in the secreted. Binds with high affinity to muscular (alpha-1/CHRNA1) and neuronal (alpha-7/CHRNA7) nicotinic acetylcholine receptor (nAChR) and inhibits acetylcholine from binding to the receptor, thereby impairing neuromuscular and neuronal transmission. This is Alpha-elapitoxin-Dpp2c from Dendroaspis polylepis polylepis (Black mamba).